A 326-amino-acid chain; its full sequence is NDRG-like protein (326 aa).

This sequence belongs to the NDRG family.

This is NDRG-like protein from Dictyostelium discoideum (Social amoeba).